A 424-amino-acid chain; its full sequence is Dihydroorotase (424 aa).

2 residues coordinate Zn(2+): histidine 61 and histidine 63. Substrate-binding positions include 63–65 (HLR) and asparagine 95. Aspartate 153, histidine 180, and histidine 233 together coordinate Zn(2+). Residue asparagine 279 participates in substrate binding. Aspartate 306 provides a ligand contact to Zn(2+). Aspartate 306 is a catalytic residue. Substrate is bound at residue histidine 310.

The protein belongs to the metallo-dependent hydrolases superfamily. DHOase family. Class I DHOase subfamily. Zn(2+) is required as a cofactor.

The enzyme catalyses (S)-dihydroorotate + H2O = N-carbamoyl-L-aspartate + H(+). It functions in the pathway pyrimidine metabolism; UMP biosynthesis via de novo pathway; (S)-dihydroorotate from bicarbonate: step 3/3. Its function is as follows. Catalyzes the reversible cyclization of carbamoyl aspartate to dihydroorotate. In Geobacter metallireducens (strain ATCC 53774 / DSM 7210 / GS-15), this protein is Dihydroorotase.